A 273-amino-acid chain; its full sequence is Dermonecrotic toxin LapSicTox-alphaIB1b2 (273 aa).

H5 is a catalytic residue. Mg(2+) is bound by residues E25 and D27. H41 acts as the Nucleophile in catalysis. Disulfide bonds link C45–C51 and C47–C190. Mg(2+) is bound at residue D85. An N-linked (GlcNAc...) asparagine glycan is attached at N250.

Belongs to the arthropod phospholipase D family. Class II subfamily. Mg(2+) serves as cofactor. In terms of tissue distribution, expressed by the venom gland.

It localises to the secreted. The enzyme catalyses an N-(acyl)-sphingosylphosphocholine = an N-(acyl)-sphingosyl-1,3-cyclic phosphate + choline. It carries out the reaction an N-(acyl)-sphingosylphosphoethanolamine = an N-(acyl)-sphingosyl-1,3-cyclic phosphate + ethanolamine. It catalyses the reaction a 1-acyl-sn-glycero-3-phosphocholine = a 1-acyl-sn-glycero-2,3-cyclic phosphate + choline. The catalysed reaction is a 1-acyl-sn-glycero-3-phosphoethanolamine = a 1-acyl-sn-glycero-2,3-cyclic phosphate + ethanolamine. Functionally, dermonecrotic toxins cleave the phosphodiester linkage between the phosphate and headgroup of certain phospholipids (sphingolipid and lysolipid substrates), forming an alcohol (often choline) and a cyclic phosphate. This toxin acts on sphingomyelin (SM). It may also act on ceramide phosphoethanolamine (CPE), lysophosphatidylcholine (LPC) and lysophosphatidylethanolamine (LPE), but not on lysophosphatidylserine (LPS), and lysophosphatidylglycerol (LPG). It acts by transphosphatidylation, releasing exclusively cyclic phosphate products as second products. Induces dermonecrosis, hemolysis, increased vascular permeability, edema, inflammatory response, and platelet aggregation. This chain is Dermonecrotic toxin LapSicTox-alphaIB1b2, found in Loxosceles apachea (Apache recluse spider).